A 153-amino-acid chain; its full sequence is MKFLCVLLLASLAATSLAILNKPEDETHLEAQPTDASAQFIRNLQISNEDLSKEPSISREDLISKEQIVIRSSRQPQSQNPKLPLSILKEKHLRNATLGSEETTEHTPSDASTTEGKLMELGHKIMRNLENTVKETIKYLKSLFSHAFEVVKT.

The signal sequence occupies residues 1–18 (MKFLCVLLLASLAATSLA). Threonine 34 carries an O-linked (GalNAc...) threonine; partial glycan. Phosphoserine is present on residues serine 47, serine 52, serine 56, serine 58, and serine 64. An O-linked (HexNAc...) serine glycan is attached at serine 78. Asparagine 95 carries N-linked (GlcNAc...) asparagine glycosylation. The interval 95 to 115 (NATLGSEETTEHTPSDASTTE) is disordered. O-linked (GalNAc...) threonine glycosylation is present at threonine 104.

The protein belongs to the PP3/GlyCAM-1 family. As to expression, highly and specifically expressed in the lactating mammary gland.

The protein localises to the membrane. The polypeptide is Glycosylation-dependent cell adhesion molecule 1 (GLYCAM1) (Bos taurus (Bovine)).